The following is a 211-amino-acid chain: Calaxin (211 aa).

3 consecutive EF-hand domains span residues 64–99 (TDDM…FLRG), 100–135 (SLEE…SLLK), and 145–180 (GIKD…ETLL). Ca(2+)-binding residues include aspartate 77, aspartate 79, aspartate 81, cysteine 83, glutamate 88, aspartate 113, asparagine 115, aspartate 117, glutamate 124, aspartate 158, aspartate 160, aspartate 162, lysine 164, and aspartate 169.

Component of the outer dynein arm-docking complex along with ODAD1, ODAD2, ODAD3 and ODAD4. As to expression, strong expression in the respiratory epithelium. Expressed in the sperm.

It is found in the cytoplasm. The protein localises to the cytoskeleton. The protein resides in the cilium axoneme. It localises to the cell projection. Its subcellular location is the cilium. It is found in the flagellum. Its function is as follows. Component of the outer dynein arm-docking complex (ODA-DC) that mediates outer dynein arms (ODA) binding onto the doublet microtubule. Seems to regulate the assembly of both ODAs and their axonemal docking complex onto ciliary microtubules. Regulates ciliary and flagellar motility and is required for cilia-driven determination of body laterality. The chain is Calaxin from Homo sapiens (Human).